A 1226-amino-acid chain; its full sequence is Chromosome-associated kinesin KIF4 (1226 aa).

One can recognise a Kinesin motor domain in the interval 8–337 (PVRVALRCRP…LRYADRARKI (330 aa)). 87–94 (GQTGSGKT) lines the ATP pocket. The stretch at 351 to 1006 (ELQRLKLQVQ…YKQKLALLHV (656 aa)) forms a coiled coil. Acidic residues predominate over residues 494 to 505 (EAASFPVPEEDS). Disordered regions lie at residues 494–516 (EAAS…GFTT), 722–741 (QRQK…GMEG), and 1052–1078 (DLLS…KQSK). Over residues 722 to 735 (QRQKEAMEKRKDSQ) the composition is skewed to basic and acidic residues. The globular stretch occupies residues 1007–1226 (ASGKKLHNIL…SGCSAITEDE (220 aa)). Over residues 1053–1064 (LLSESESEEESD) the composition is skewed to acidic residues.

Belongs to the TRAFAC class myosin-kinesin ATPase superfamily. Kinesin family. Chromokinesin subfamily. Requires [2Fe-2S] cluster as cofactor. [4Fe-4S] cluster serves as cofactor. Expressed in oocytes, eggs, testes and brain.

The protein localises to the nucleus. It is found in the chromosome. The protein resides in the cytoplasm. It localises to the cytoskeleton. Functionally, iron-sulfur (Fe-S) cluster binding motor protein that has a role in chromosome segregation during mitosis. Required for mitotic chromosomal positioning and bipolar spindle stabilization. The polypeptide is Chromosome-associated kinesin KIF4 (kif4) (Xenopus laevis (African clawed frog)).